We begin with the raw amino-acid sequence, 212 residues long: uncharacterized protein (212 aa).

The tract at residues 1 to 88 (MAEEQKIALE…PAPAKPASAS (88 aa)) is disordered. Phosphoserine is present on Ser-13. The span at 23–41 (ADTPAPAPAEIPAPAPAPT) shows a compositional bias: pro residues. Basic and acidic residues predominate over residues 45-54 (VTKDVAEEKI).

The protein belongs to the remorin family.

It localises to the cell membrane. This is an uncharacterized protein from Arabidopsis thaliana (Mouse-ear cress).